The following is a 284-amino-acid chain: Cell division protein DivIB (284 aa).

Residues 1 to 10 (MAWLRKKEQQ) show a composition bias toward basic and acidic residues. Residues 1–38 (MAWLRKKEQQSDPLTPWQQYQARQQQTPRHDRRQKPKL) are disordered. At 1–56 (MAWLRKKEQQSDPLTPWQQYQARQQQTPRHDRRQKPKLDVNLPKIQTLRRRKLVKN) the chain is on the cytoplasmic side. Residues 57–77 (LVLILLPLLLLLGVFGYFASP) form a helical membrane-spanning segment. Residues 78–284 (LSKVGLVSVQ…YSSSEKSSND (207 aa)) lie on the Extracellular side of the membrane. One can recognise a POTRA domain in the interval 79–150 (SKVGLVSVQG…NRIIIKTSEY (72 aa)).

The protein belongs to the FtsQ/DivIB family. DivIB subfamily.

The protein localises to the cell membrane. Functionally, cell division protein that may be involved in stabilizing or promoting the assembly of the division complex. This is Cell division protein DivIB from Lacticaseibacillus rhamnosus (strain ATCC 53103 / LMG 18243 / GG) (Lactobacillus rhamnosus).